Consider the following 385-residue polypeptide: Leucine aminopeptidase 1 (385 aa).

The first 19 residues, 1–19, serve as a signal peptide directing secretion; it reads MKFPNLLSLGVAASTTVLA. Positions 20–87 are excised as a propeptide; that stretch reads AVPNQKPIGD…FPRTFAQTTV (68 aa). The N-linked (GlcNAc...) asparagine glycan is linked to asparagine 177. Zn(2+) contacts are provided by histidine 185, aspartate 204, glutamate 243, and aspartate 270. Cysteine 319 and cysteine 323 are oxidised to a cystine. Histidine 352 is a binding site for Zn(2+).

The protein belongs to the peptidase M28 family. M28E subfamily. As to quaternary structure, monomer. Zn(2+) serves as cofactor.

It is found in the secreted. In terms of biological role, extracellular aminopeptidase that allows assimilation of proteinaceous substrates. The protein is Leucine aminopeptidase 1 (LAP1) of Ajellomyces capsulatus (strain H88) (Darling's disease fungus).